The following is a 300-amino-acid chain: MKNLTHLQRLEAEAIYVFREVAATFSNPVMLYSVGKDSSVMLHLAMKAFYPAPPPFPFLHVDTTWKFREMIEFRDAQAREKGFELLVHVNEQGVRDGIGPFTHGSNVHTHIMKTVGLRQALDKYRFDAAFGGARRDEEKSRAKERIFSFRNAQHGWDPKNQRPEMWKIYNTRVSKGESIRVFPLSNWTELDIWQYILQENIPIVPLYFAARRPVVERDGMLIMVDDDRMKLRPGEPVENRLVRFRTLGCYPLTGAIPSSAANLSDIVEEMLIARTSERQGRAIDRDEAGSMEKKKREGYF.

The tract at residues 281 to 300 (RAIDRDEAGSMEKKKREGYF) is disordered.

Belongs to the PAPS reductase family. CysD subfamily. Heterodimer composed of CysD, the smaller subunit, and CysN.

The catalysed reaction is sulfate + ATP + H(+) = adenosine 5'-phosphosulfate + diphosphate. The protein operates within sulfur metabolism; hydrogen sulfide biosynthesis; sulfite from sulfate: step 1/3. Functionally, with CysN forms the ATP sulfurylase (ATPS) that catalyzes the adenylation of sulfate producing adenosine 5'-phosphosulfate (APS) and diphosphate, the first enzymatic step in sulfur assimilation pathway. APS synthesis involves the formation of a high-energy phosphoric-sulfuric acid anhydride bond driven by GTP hydrolysis by CysN coupled to ATP hydrolysis by CysD. The sequence is that of Sulfate adenylyltransferase subunit 2 from Brucella abortus (strain 2308).